The primary structure comprises 483 residues: MTATATEHVATAGATGRIARVIGPVVDVEFPADAIPSIYNALTTEITLNGQTKTITFETSQHLGDNLVRAISLQATDGLVRGTTVQDSGAPISVPVGDGVKGHIFNVLGKPLDVEESEIKADAYWPIHRKAPSFASLEGSTEMLETGIKVIDLLTPYIKGGKIGLFGGAGVGKTVLIQEMITRVARNFGGTSVFAGVGERTREGNDLWVEMEEAGVLKDTALVFGQMDEPPGTRLRVALSALTMAEYFRDVQNQDVLLFIDNIFRFTQAGSEVSTLLGRMPSAVGYQPNLADEMGLLQERITSTKGHSITSMQAIYVPADDYTDPAPATTFAHLDATTELSREIASRGLYPAVDPLTSTSRILDPQYIGKDHYNTAVRVKQILQKNKELQDIIAILGVDELSEEDKIVVSRARRIQQFLSQNTYTAKQFTGVEGSTVSIKDTVEGFTAICDGELDHIAEQAFFNVGGLDDVERNWAKIQEQTK.

167–174 (GGAGVGKT) serves as a coordination point for ATP.

This sequence belongs to the ATPase alpha/beta chains family. F-type ATPases have 2 components, CF(1) - the catalytic core - and CF(0) - the membrane proton channel. CF(1) has five subunits: alpha(3), beta(3), gamma(1), delta(1), epsilon(1). CF(0) has three main subunits: a(1), b(2) and c(9-12). The alpha and beta chains form an alternating ring which encloses part of the gamma chain. CF(1) is attached to CF(0) by a central stalk formed by the gamma and epsilon chains, while a peripheral stalk is formed by the delta and b chains.

It localises to the cell membrane. It catalyses the reaction ATP + H2O + 4 H(+)(in) = ADP + phosphate + 5 H(+)(out). In terms of biological role, produces ATP from ADP in the presence of a proton gradient across the membrane. The catalytic sites are hosted primarily by the beta subunits. The polypeptide is ATP synthase subunit beta (Paenarthrobacter aurescens (strain TC1)).